Here is a 123-residue protein sequence, read N- to C-terminus: Dihydroneopterin triphosphate 2'-epimerase (123 aa).

It belongs to the DHNA family. In terms of assembly, homooctamer. Dimer of tetramers.

It carries out the reaction 7,8-dihydroneopterin 3'-triphosphate = 7,8-dihydromonapterin 3'-triphosphate. Catalyzes the epimerization of carbon 2' of the side chain of 7,8-dihydroneopterin triphosphate (H2NTP) to form 7,8-dihydromonapterin triphosphate (H2MTP). Is required for tetrahydromonapterin biosynthesis. In Pseudomonas aeruginosa (strain ATCC 15692 / DSM 22644 / CIP 104116 / JCM 14847 / LMG 12228 / 1C / PRS 101 / PAO1), this protein is Dihydroneopterin triphosphate 2'-epimerase.